A 224-amino-acid chain; its full sequence is uncharacterized protein (224 aa).

Positions 1-17 (MFTILLYFLVLFWVTNA) are cleaved as a signal peptide.

This is an uncharacterized protein from Caenorhabditis elegans.